Here is a 146-residue protein sequence, read N- to C-terminus: Anti-sigma F factor (146 aa).

It belongs to the anti-sigma-factor family.

It catalyses the reaction L-seryl-[protein] + ATP = O-phospho-L-seryl-[protein] + ADP + H(+). The enzyme catalyses L-threonyl-[protein] + ATP = O-phospho-L-threonyl-[protein] + ADP + H(+). In terms of biological role, binds to sigma F and blocks its ability to form an RNA polymerase holoenzyme (E-sigma F). Phosphorylates SpoIIAA on a serine residue. This phosphorylation may enable SpoIIAA to act as an anti-anti-sigma factor that counteracts SpoIIAB and thus releases sigma F from inhibition. In Geobacillus stearothermophilus (Bacillus stearothermophilus), this protein is Anti-sigma F factor.